The sequence spans 162 residues: UPF0262 protein Acry_0160 (162 aa).

Belongs to the UPF0262 family.

The sequence is that of UPF0262 protein Acry_0160 from Acidiphilium cryptum (strain JF-5).